The chain runs to 207 residues: Ribosomal RNA small subunit methyltransferase G (207 aa).

Residues Gly74, Leu79, 125-126, and Arg140 contribute to the S-adenosyl-L-methionine site; that span reads VE.

It belongs to the methyltransferase superfamily. RNA methyltransferase RsmG family.

Its subcellular location is the cytoplasm. The catalysed reaction is guanosine(527) in 16S rRNA + S-adenosyl-L-methionine = N(7)-methylguanosine(527) in 16S rRNA + S-adenosyl-L-homocysteine. Functionally, specifically methylates the N7 position of guanine in position 527 of 16S rRNA. The protein is Ribosomal RNA small subunit methyltransferase G of Shewanella pealeana (strain ATCC 700345 / ANG-SQ1).